The primary structure comprises 24 residues: MRWEKPSYNDMRFGFEVTMYIYNR.

The segment at residues 16–20 is a cross-link (pyrroloquinoline quinone (Glu-Tyr)); the sequence is EVTMY.

This sequence belongs to the PqqA family.

It functions in the pathway cofactor biosynthesis; pyrroloquinoline quinone biosynthesis. Its function is as follows. Required for coenzyme pyrroloquinoline quinone (PQQ) biosynthesis. PQQ is probably formed by cross-linking a specific glutamate to a specific tyrosine residue and excising these residues from the peptide. This Methylococcus capsulatus (strain ATCC 33009 / NCIMB 11132 / Bath) protein is Coenzyme PQQ synthesis protein A.